A 633-amino-acid chain; its full sequence is Protein CASP (633 aa).

Over 1–601 (MAVASEALLQ…LLFSRATRGL (601 aa)) the chain is Cytoplasmic. The segment at 39-60 (QKTSLDERKELSSKTKEFRKQP) is disordered. Coiled coils occupy residues 111-339 (IEAA…LANK) and 369-433 (SLES…VDVE). The chain crosses the membrane as a helical; Anchor for type IV membrane protein span at residues 602–622 (FFMYLILLHLFIMIVLLKLGI). At 623-633 (AGNTAYTPMNY) the chain is on the lumenal side.

It belongs to the CASP family.

It localises to the golgi apparatus membrane. May be involved in intra-Golgi transport. This chain is Protein CASP (coy1), found in Schizosaccharomyces pombe (strain 972 / ATCC 24843) (Fission yeast).